Reading from the N-terminus, the 166-residue chain is Protein SprT (166 aa).

The SprT-like domain occupies 21 to 160; that stretch reads ANQHFSREFP…CQQCQQTLAF (140 aa). His-74 provides a ligand contact to Zn(2+). Glu-75 is an active-site residue. Position 78 (His-78) interacts with Zn(2+).

The protein belongs to the SprT family. It depends on Zn(2+) as a cofactor.

It localises to the cytoplasm. This chain is Protein SprT, found in Vibrio atlanticus (strain LGP32) (Vibrio splendidus (strain Mel32)).